The following is a 1218-amino-acid chain: NACHT, LRR and PYD domains-containing protein 1a allele 5 (1218 aa).

The span at 1-29 (MGESQSKQESNTRVAQHGSQQDVDPTFQT) shows a compositional bias: polar residues. Disordered stretches follow at residues 1-44 (MGES…QVEQ) and 71-91 (EMDHESRRHSHQSKKKLDRSE). Positions 77–87 (RRHSHQSKKKL) are enriched in basic residues. The NACHT domain maps to 175-484 (QLVIIEGAAG…EFFAAMSYIL (310 aa)). An ATP-binding site is contributed by 181–188 (GAAGIGKS). 3 LRR repeats span residues 343–364 (KERNTIIDFNLIGSIPVLLTLC), 673–693 (NLEELDLSGNPLSYSAVRSLC), and 730–750 (RLAELDLRLNDLGDNGVRQLC). Residues 799–815 (TMPTENTDGEESLTSSK) show a composition bias toward polar residues. The segment at 799 to 842 (TMPTENTDGEESLTSSKQQQQQSGDKHMEPLGTDDDFWGPSGPV) is disordered. Positions 835 to 968 (FWGPSGPVST…HFAVLENPSF (134 aa)) are ZU5. Positions 835-1118 (FWGPSGPVST…LRPALPRMAS (284 aa)) constitute an FIIND domain. A UPA region spans residues 969–1118 (SPMGVLLRMI…LRPALPRMAS (150 aa)). In terms of domain architecture, CARD spans 1122 to 1211 (DAPALLHFVD…HLIMDLLEKS (90 aa)).

It belongs to the NLRP family. In terms of assembly, interacts (via LRR repeats) with BCL2 and BCL2L1 (via the loop between motifs BH4 and BH3). Interacts with NOD2; this interaction is enhanced in the presence of muramyl dipeptide (MDP) and increases IL1B release. Interacts with EIF2AK2/PKR; this interaction requires EIF2AK2 activity, is accompanied by EIF2AK2 autophosphorylation and promotes inflammasome assembly in response to danger-associated signals. Interacts with MEFV; this interaction targets Nlrp1a to degradation by autophagy, hence preventing excessive IL1B- and IL18-mediated inflammation. Interacts with DPP9; leading to inhibit activation of the inflammasome. DPP9 acts via formation of a ternary complex, composed of a DPP9 homodimer, one full-length NLRP1 protein, and one cleaved C-terminus of Nlrp1a (NACHT, LRR and PYD domains-containing protein 1a, C-terminus). Interacts with DPP8; leading to inhibit activation of the inflammasome, probably via formation of a ternary complex with DPP8. As to quaternary structure, interacts with the C-terminal part of Nlrp1a (NACHT, LRR and PYD domains-containing protein 1a, C-terminus) in absence of pathogens and other damage-associated signals. Interacts with the N-terminal part of Nlrp1a (NACHT, LRR and PYD domains-containing protein 1a, N-terminus) in absence of pathogens and other damage-associated signals. Homomultimer; forms the Nlrp1a inflammasome polymeric complex, a filament composed of homopolymers of this form in response to pathogens and other damage-associated signals. The Nlrp1a inflammasome polymeric complex directly recruits pro-caspase-1 (proCASP1) independently of PYCARD/ASC. Interacts (via CARD domain) with CASP1 (via CARD domain); leading to CASP1 activation. Autocatalytically cleaved. Autocatalytic cleavage in FIIND region occurs constitutively, prior to activation signals, and is required for inflammasome activity (IL1B release), possibly by facilitating CASP1 binding. Both N- and C-terminal parts remain associated non-covalently. In terms of processing, ubiquitinated in response to pathogen-associated signals, leading to its degradation by the proteasome and subsequent release of the cleaved C-terminal part of the protein (NACHT, LRR and PYD domains-containing protein 1a, C-terminus), which polymerizes and forms the Nlrp1a inflammasome.

It is found in the cytoplasm. The protein localises to the cytosol. The protein resides in the nucleus. It localises to the inflammasome. Activated by pathogens and other damage-associated signals: activation promotes ubiquitination and degradation of the N-terminal part, releasing the cleaved C-terminal part of the protein (NACHT, LRR and PYD domains-containing protein 1a, C-terminus), which polymerizes and forms the Nlrp1a inflammasome. Nlrp1a inflammasome is inhibited by DPP8 and DPP9, which sequester the C-terminal fragment of Nlrp1a (NACHT, LRR and PYD domains-containing protein 1a, C-terminus) in a ternary complex, thereby preventing Nlrp1a oligomerization and activation. Nlrp1a inflammasome is strongly activated by Val-boroPro (Talabostat, PT-100), an inhibitor of dipeptidyl peptidases DPP8 and DPP9. Val-boroPro relieves inhibition of DPP8 and/or DPP9 by promoting disruption of the ternary complex, releasing its C-terminal part from autoinhibition. Not activated by cleavage by B.anthracis lethal toxin (LT) endopeptidase. Highly activated by Toxoplasma gondii. Acts as the sensor component of the Nlrp1a inflammasome, which mediates inflammasome activation in response to various pathogen-associated signals, leading to subsequent pyroptosis. Inflammasomes are supramolecular complexes that assemble in the cytosol in response to pathogens and other damage-associated signals and play critical roles in innate immunity and inflammation. Acts as a recognition receptor (PRR): recognizes specific pathogens and other damage-associated signals, such as Val-boroPro inhibitor, and mediates the formation of the inflammasome polymeric complex. In response to pathogen-associated signals, the N-terminal part of Nlrp1a is degraded by the proteasome, releasing the cleaved C-terminal part of the protein (NACHT, LRR and PYD domains-containing protein 1a, C-terminus), which polymerizes to initiate the formation of the inflammasome complex: the inflammasome directly recruits pro-caspase-1 (proCASP1) independently of PYCARD/ASC and promotes caspase-1 (CASP1) activation, which subsequently cleaves and activates inflammatory cytokines IL1B and IL18 and gasdermin-D (GSDMD), leading to pyroptosis. In the absence of GSDMD expression, the Nlrp1a inflammasome is able to recruit and activate CASP8, leading to activation of gasdermin-E (GSDME). Functionally, constitutes the precursor of the Nlrp1a inflammasome, which mediates autoproteolytic processing within the FIIND domain to generate the N-terminal and C-terminal parts, which are associated non-covalently in absence of pathogens and other damage-associated signals. In terms of biological role, regulatory part that prevents formation of the Nlrp1a inflammasome: in absence of pathogens and other damage-associated signals, interacts with the C-terminal part of Nlrp1a (NACHT, LRR and PYD domains-containing protein 1a, C-terminus), preventing activation of the Nlrp1a inflammasome. In response to pathogen-associated signals, this part is ubiquitinated by the N-end rule pathway and degraded by the proteasome, releasing the cleaved C-terminal part of the protein, which polymerizes and forms the Nlrp1a inflammasome. Its function is as follows. Constitutes the active part of the Nlrp1a inflammasome. In absence of pathogens and other damage-associated signals, interacts with the N-terminal part of Nlrp1a (NACHT, LRR and PYD domains-containing protein 1a, N-terminus), preventing activation of the Nlrp1a inflammasome. In response to pathogen-associated signals, the N-terminal part of Nlrp1a is degraded by the proteasome, releasing this form, which polymerizes to form the Nlrp1a inflammasome complex: the Nlrp1a inflammasome complex then directly recruits pro-caspase-1 (proCASP1) and promotes caspase-1 (CASP1) activation, leading to gasdermin-D (GSDMD) cleavage and subsequent pyroptosis. The sequence is that of NACHT, LRR and PYD domains-containing protein 1a allele 5 from Rattus norvegicus (Rat).